Consider the following 366-residue polypeptide: Isocitrate dehydrogenase [NAD] subunit alpha, mitochondrial (366 aa).

Residues 1-27 (MAGPAWISKVSRLLGAFHNPKQVTRGF) constitute a mitochondrion transit peptide. At Lys-77 the chain carries N6-succinyllysine. Thr-101 bears the Phosphothreonine mark. Residues Arg-115, Arg-125, and Arg-146 each contribute to the substrate site. At Lys-223 the chain carries N6-acetyllysine. Positions 233, 257, and 261 each coordinate Mg(2+). Lys-343 bears the N6-acetyllysine; alternate mark. An N6-succinyllysine; alternate modification is found at Lys-343. Lys-350 is subject to N6-succinyllysine.

It belongs to the isocitrate and isopropylmalate dehydrogenases family. In terms of assembly, heterooligomer of subunits alpha (IDH3A), beta (IDH3B), and gamma (IDH3G) in the apparent ratio of 2:1:1. The heterodimer containing one IDH3A and one IDH3B subunit and the heterodimer containing one IDH3A and one IDH3G subunit assemble into a heterotetramer (which contains two subunits of IDH3A, one of IDH3B and one of IDH3G) and further into the heterooctamer. The cofactor is Mg(2+). Mn(2+) serves as cofactor.

The protein localises to the mitochondrion. The catalysed reaction is D-threo-isocitrate + NAD(+) = 2-oxoglutarate + CO2 + NADH. Its activity is regulated as follows. The heterotetramer and the heterodimer composed of IDH3A and IDH3G subunits can be allosterically activated by citrate (CIT) or/and ADP, and the two activators can act independently or synergistically. The heterodimer composed of IDH3A and IDH3B subunits cannot be allosterically regulated and the allosteric regulation of the heterotetramer is through the IDH3G subunit and not the IDH3B subunit. The IDH3G subunit contains the allosteric site which consists of a CIT-binding site and an ADP-binding site, and the binding of CIT and ADP causes conformational changes at the allosteric site which are transmitted to the active site in the catalytic subunit (IDH3A) through a cascade of conformational changes at the heterodimer interface, leading to stabilization of the isocitrate-binding at the active site and thus activation of the enzyme. ATP can activate the heterotetramer and the heterodimer composed of IDH3A and IDH3G subunits at low concentrations but inhibits their activities at high concentrations, whereas ATP exhibits only inhibitory effect on the heterodimer composed of IDH3A and IDH3B subunits. In terms of biological role, catalytic subunit of the enzyme which catalyzes the decarboxylation of isocitrate (ICT) into alpha-ketoglutarate. The heterodimer composed of the alpha (IDH3A) and beta (IDH3B) subunits and the heterodimer composed of the alpha (IDH3A) and gamma (IDH3G) subunits, have considerable basal activity but the full activity of the heterotetramer (containing two subunits of IDH3A, one of IDH3B and one of IDH3G) requires the assembly and cooperative function of both heterodimers. In Homo sapiens (Human), this protein is Isocitrate dehydrogenase [NAD] subunit alpha, mitochondrial.